A 295-amino-acid polypeptide reads, in one-letter code: MQPSPTHRASFSIGSEAAARRVVDVLTEVFFEGDAAVAAFERPDGQWDVTLHFADAPDQAWLRELVVNSAGNEIADTLAFDTVEAKDWVKASLEDLVPVPAGRFVVHGSHDRDRVAPNKLKIEIEAALAFGTGHHGTTRGCLLLLDHVLKSSRPSNVLDLGTGTGVLAIAAAKALHRAVLASDIDPPSVRVAAENGRLNEVGHHVRVIRATGFAAPDFARAGPFDLVLANILANPLRHLASPMARHLAPGARVILSGLLTHQAPAVIAAYRARGLVPLRHLRIEGWSSLLLRKVG.

S-adenosyl-L-methionine contacts are provided by Thr-138, Gly-161, Asp-183, and Asn-230.

The protein belongs to the methyltransferase superfamily. PrmA family.

It localises to the cytoplasm. It carries out the reaction L-lysyl-[protein] + 3 S-adenosyl-L-methionine = N(6),N(6),N(6)-trimethyl-L-lysyl-[protein] + 3 S-adenosyl-L-homocysteine + 3 H(+). Methylates ribosomal protein L11. This is Ribosomal protein L11 methyltransferase from Bradyrhizobium diazoefficiens (strain JCM 10833 / BCRC 13528 / IAM 13628 / NBRC 14792 / USDA 110).